The following is a 95-amino-acid chain: RING finger protein Z (95 aa).

A lipid anchor (N-myristoyl glycine; by host) is attached at Gly-2. An RING-type; atypical zinc finger spans residues 38-74 (CKSCWFANKGLIKCSNHYLCLKCLTAMLSRSDYCGIC). Positions 88–91 (PSAP) match the PTAP/PSAP motif motif.

This sequence belongs to the arenaviridae Z protein family. In terms of assembly, interacts with protein NP; this interaction probably directs the encapsidated genome to budding sites. Interacts (via RING domain) with polymerase L; this interaction inhibits viral transcription and replication, Z partially blocks the product exit tunnel for the releasing nascent RNA product. Interacts with the glycoprotein complex; this interaction plays a role in virion budding. Interacts with host eIF4E; this interaction results in eIF4E reduced affinity for its substrate, the 5'-m7 G cap structure. Interacts (via late-budding domain) with host TSG101; this interaction is essential for budding and release of viral particles. Interacts with host RPLP0; this interaction may serve to load ribosome-like particles inside the virion. Interacts with host PML; this interaction induces PML bodies redistribution in the cytoplasm upon viral infection. In terms of processing, myristoylation is required for the role of RING finger protein Z in assembly and budding.

The protein resides in the virion. Its subcellular location is the host cytoplasm. It is found in the host perinuclear region. The protein localises to the host cell membrane. Its function is as follows. Plays a crucial role in virion assembly and budding. Expressed late in the virus life cycle, it acts as an inhibitor of viral transcription and RNA synthesis by interacting with the viral polymerase L. Presumably recruits the NP encapsidated genome to cellular membranes at budding sites via direct interaction with NP. Plays critical roles in the final steps of viral release by interacting with host TSG101, a member of the vacuolar protein-sorting pathway and using other cellular host proteins involved in vesicle formation pathway. The budding of the virus progeny occurs after association of protein Z with the viral glycoprotein complex SSP-GP1-GP2 at the cell periphery, step that requires myristoylation of protein Z. Also selectively represses protein production by associating with host eIF4E. In cell-based minigenome assay, has an inhibitory effect on the ribonucleoprotein machinery (vRNP), which is responsible for the replication and transcription of the viral genome. The chain is RING finger protein Z from Bear Canyon mammarenavirus (isolate Mouse/United States/AV A0070039/2000) (BCNV).